The following is a 224-amino-acid chain: Peroxynitrite isomerase 2 (224 aa).

The short motif at 71–77 is the GXWXGXG element; the sequence is GVWRGEG. Heme b-binding residues include lysine 187 and histidine 214.

This sequence belongs to the nitrobindin family. Homodimer. Heme b is required as a cofactor.

It catalyses the reaction peroxynitrite = nitrate. It participates in nitrogen metabolism. In terms of biological role, heme-binding protein able to scavenge peroxynitrite and to protect free L-tyrosine against peroxynitrite-mediated nitration, by acting as a peroxynitrite isomerase that converts peroxynitrite to nitrate. Therefore, this protein likely plays a role in peroxynitrite sensing and in the detoxification of reactive nitrogen and oxygen species (RNS and ROS, respectively). Is able to bind nitric oxide (NO) in vitro, but may act as a sensor of peroxynitrite levels in vivo. The chain is Peroxynitrite isomerase 2 from Mycobacterium sp. (strain JLS).